Consider the following 214-residue polypeptide: U3 small nucleolar RNA-associated protein 16 (214 aa).

Residues 1 to 10 (MSNGHVKFDA) show a composition bias toward basic and acidic residues. A disordered region spans residues 1–106 (MSNGHVKFDA…KSVNETEVTD (106 aa)). Ser-16 carries the phosphoserine modification. Residues 22–41 (DRQDDVLVISKKDKEVHSSS) show a composition bias toward basic and acidic residues. Residues 42–52 (DEESDDDDAPQ) show a composition bias toward acidic residues. Ser-45, Ser-65, and Ser-144 each carry phosphoserine. Positions 54–75 (EGLHSGKSEVESQITQREEAIR) are enriched in basic and acidic residues. The disordered stretch occupies residues 182–214 (STTQDSKTLPPKKESSIIRSKDRWLNRKALNKG). Residues 192-206 (PKKESSIIRSKDRWL) show a composition bias toward basic and acidic residues.

Belongs to the UTP16 family. As to quaternary structure, part of the small subunit (SSU) processome composed of at least 40 protein subunits and the RNA chaperone small nucleolar RNA (snoRNA) U3. Interacts with snoRNA U3. Interacts with MPP10.

The protein resides in the nucleus. It is found in the nucleolus. Its function is as follows. Functions as part of the small subunit (SSU) processome, first precursor of the small eukaryotic ribosomal subunit that coordinates the first two steps of ribosome biogenesis in transcription of the primary transcript pre-RNA and pre-18S processing. During the assembly of the SSU processome in the nucleolus, many ribosome biogenesis factors, an RNA chaperone and ribosomal proteins associate with the nascent pre-rRNA and work in concert to generate RNA folding, modifications, rearrangements and cleavage as well as targeted degradation of pre-ribosomal RNA by the RNA exosome. Has a role in bud site selection maybe via the regulation of expression of bipolar budding components. This Saccharomyces cerevisiae (strain ATCC 204508 / S288c) (Baker's yeast) protein is U3 small nucleolar RNA-associated protein 16 (BUD21).